Consider the following 235-residue polypeptide: Germin-like protein 1-4 (235 aa).

Positions 1–27 are cleaved as a signal peptide; that stretch reads MAAKLPTVVLLASFAAVILSLAAPLLA. Residues Cys-37 and Cys-55 are joined by a disulfide bond. An N-linked (GlcNAc...) asparagine glycan is attached at Asn-60. The Cupin type-1 domain maps to 69 to 226; it reads PGLGKPADVY…AFQVDGGVVE (158 aa). Mn(2+)-binding residues include His-120, His-122, Glu-127, and His-171.

This sequence belongs to the germin family. In terms of assembly, oligomer (believed to be a pentamer but probably hexamer).

Its subcellular location is the secreted. The protein resides in the extracellular space. The protein localises to the apoplast. Functionally, may play a role in plant defense. Probably has no oxalate oxidase activity even if the active site is conserved. The polypeptide is Germin-like protein 1-4 (Oryza sativa subsp. japonica (Rice)).